The chain runs to 489 residues: Rhamnulokinase (489 aa).

Residue 13–17 coordinates ATP; that stretch reads ASSGR. A disulfide bond links cysteine 68 and cysteine 222. Residues glycine 83 and 236 to 238 contribute to the substrate site; that span reads HDT. Residue aspartate 237 is the Proton acceptor of the active site. Threonine 259 lines the ATP pocket. Asparagine 296 serves as a coordination point for substrate. Glutamine 304 serves as a coordination point for ATP. The cysteines at positions 353 and 370 are disulfide-linked. An ATP-binding site is contributed by glycine 402. The cysteines at positions 413 and 417 are disulfide-linked.

This sequence belongs to the rhamnulokinase family. Monomer. Requires Mg(2+) as cofactor.

The catalysed reaction is L-rhamnulose + ATP = L-rhamnulose 1-phosphate + ADP + H(+). The protein operates within carbohydrate degradation; L-rhamnose degradation; glycerone phosphate from L-rhamnose: step 2/3. Functionally, involved in the catabolism of L-rhamnose (6-deoxy-L-mannose). Catalyzes the transfer of the gamma-phosphate group from ATP to the 1-hydroxyl group of L-rhamnulose to yield L-rhamnulose 1-phosphate. This chain is Rhamnulokinase, found in Escherichia coli O139:H28 (strain E24377A / ETEC).